A 396-amino-acid polypeptide reads, in one-letter code: 1-deoxy-D-xylulose 5-phosphate reductoisomerase (396 aa).

Thr10, Gly11, Ser12, Ile13, Asn38, and Asn123 together coordinate NADPH. Lys124 is a 1-deoxy-D-xylulose 5-phosphate binding site. Glu125 contributes to the NADPH binding site. Asp149 is a binding site for Mn(2+). 1-deoxy-D-xylulose 5-phosphate-binding residues include Ser150, Glu151, Ser185, and His208. A Mn(2+)-binding site is contributed by Glu151. NADPH is bound at residue Gly214. Ser221, Asn226, Lys227, and Glu230 together coordinate 1-deoxy-D-xylulose 5-phosphate. Glu230 is a binding site for Mn(2+).

It belongs to the DXR family. Requires Mg(2+) as cofactor. It depends on Mn(2+) as a cofactor.

It carries out the reaction 2-C-methyl-D-erythritol 4-phosphate + NADP(+) = 1-deoxy-D-xylulose 5-phosphate + NADPH + H(+). The protein operates within isoprenoid biosynthesis; isopentenyl diphosphate biosynthesis via DXP pathway; isopentenyl diphosphate from 1-deoxy-D-xylulose 5-phosphate: step 1/6. In terms of biological role, catalyzes the NADPH-dependent rearrangement and reduction of 1-deoxy-D-xylulose-5-phosphate (DXP) to 2-C-methyl-D-erythritol 4-phosphate (MEP). The polypeptide is 1-deoxy-D-xylulose 5-phosphate reductoisomerase (Shewanella pealeana (strain ATCC 700345 / ANG-SQ1)).